Here is a 559-residue protein sequence, read N- to C-terminus: Serine/threonine-protein kinase VRK1 (559 aa).

In terms of domain architecture, Protein kinase spans 32-388 (YIVGKQFATG…EDDDEEEEVI (357 aa)). ATP is bound by residues 38–46 (FATGGFGRI) and Lys61. Asp167 serves as the catalytic Proton acceptor. 2 disordered regions span residues 315-419 (EAAQ…ATSD) and 448-559 (SSCE…SSEV). Composition is skewed to polar residues over residues 405-418 (RSFN…TATS) and 449-460 (SCESQYESNEPG). Residues 533-542 (TSARYQEKRA) show a composition bias toward basic and acidic residues. Polar residues predominate over residues 545–559 (NTKPTFDDSSCSSEV).

The protein belongs to the protein kinase superfamily. CK1 Ser/Thr protein kinase family. VRK subfamily. Post-translationally, autophosphorylates in vitro.

Its subcellular location is the nucleus. The protein localises to the cytoplasm. It is found in the cajal body. It carries out the reaction L-seryl-[protein] + ATP = O-phospho-L-seryl-[protein] + ADP + H(+). It catalyses the reaction L-threonyl-[protein] + ATP = O-phospho-L-threonyl-[protein] + ADP + H(+). Functionally, serine/threonine kinase that phosphorylates baf-1, thus regulating the association of baf-1 with chromatin and nuclear membrane proteins during nuclear envelope formation. May act through the egl-17 signaling pathway. Essential in hermaphrodites for formation of the vulva, uterus, and uterine seam cells and for development and maintenance of the somatic gonad and thus the germ line. Acts to prevent cep-1 from triggering an inappropriate cell cycle arrest, thereby promoting germ cell proliferation. Regulates anchor cell polarity and the timing of anchor cell invasion through the basement membranes separating vulval and somatic gonadal cells during the L3 larval stage. The chain is Serine/threonine-protein kinase VRK1 from Caenorhabditis briggsae.